A 258-amino-acid polypeptide reads, in one-letter code: Ribosomal RNA large subunit methyltransferase E (258 aa).

The S-adenosyl-L-methionine site is built by G58, W60, D78, D96, and D120. Residue K160 is the Proton acceptor of the active site.

It belongs to the class I-like SAM-binding methyltransferase superfamily. RNA methyltransferase RlmE family.

Its subcellular location is the cytoplasm. It catalyses the reaction uridine(2552) in 23S rRNA + S-adenosyl-L-methionine = 2'-O-methyluridine(2552) in 23S rRNA + S-adenosyl-L-homocysteine + H(+). Its function is as follows. Specifically methylates the uridine in position 2552 of 23S rRNA at the 2'-O position of the ribose in the fully assembled 50S ribosomal subunit. The sequence is that of Ribosomal RNA large subunit methyltransferase E from Methanococcus maripaludis (strain C7 / ATCC BAA-1331).